A 463-amino-acid polypeptide reads, in one-letter code: Thiamine-repressible acid phosphatase SPBC21H7.03c (463 aa).

The first 18 residues, 1 to 18 (MQLCIISLWFLAAFIVNA), serve as a signal peptide directing secretion. H69 acts as the Nucleophile in catalysis. Residues N98, N104, N221, and N324 are each glycosylated (N-linked (GlcNAc...) asparagine). The active-site Proton donor is D341. N439 and N458 each carry an N-linked (GlcNAc...) asparagine glycan.

This sequence belongs to the histidine acid phosphatase family.

The protein localises to the secreted. It localises to the cell wall. It catalyses the reaction a phosphate monoester + H2O = an alcohol + phosphate. May dephosphorylate thiamine phosphates. The protein is Thiamine-repressible acid phosphatase SPBC21H7.03c of Schizosaccharomyces pombe (strain 972 / ATCC 24843) (Fission yeast).